The following is a 382-amino-acid chain: Carbamoyl phosphate synthase small chain (382 aa).

Positions Met1–Glu189 are CPSase. Residues Ser47, Gly241, and Gly243 each contribute to the L-glutamine site. Residues His193–Ser380 form the Glutamine amidotransferase type-1 domain. Residue Cys269 is the Nucleophile of the active site. The L-glutamine site is built by Leu270, Gln273, Asn311, Gly313, and Phe314. Active-site residues include His353 and Glu355.

Belongs to the CarA family. In terms of assembly, composed of two chains; the small (or glutamine) chain promotes the hydrolysis of glutamine to ammonia, which is used by the large (or ammonia) chain to synthesize carbamoyl phosphate. Tetramer of heterodimers (alpha,beta)4.

The enzyme catalyses hydrogencarbonate + L-glutamine + 2 ATP + H2O = carbamoyl phosphate + L-glutamate + 2 ADP + phosphate + 2 H(+). It catalyses the reaction L-glutamine + H2O = L-glutamate + NH4(+). It participates in amino-acid biosynthesis; L-arginine biosynthesis; carbamoyl phosphate from bicarbonate: step 1/1. Its pathway is pyrimidine metabolism; UMP biosynthesis via de novo pathway; (S)-dihydroorotate from bicarbonate: step 1/3. Its function is as follows. Small subunit of the glutamine-dependent carbamoyl phosphate synthetase (CPSase). CPSase catalyzes the formation of carbamoyl phosphate from the ammonia moiety of glutamine, carbonate, and phosphate donated by ATP, constituting the first step of 2 biosynthetic pathways, one leading to arginine and/or urea and the other to pyrimidine nucleotides. The small subunit (glutamine amidotransferase) binds and cleaves glutamine to supply the large subunit with the substrate ammonia. The polypeptide is Carbamoyl phosphate synthase small chain (Pectobacterium atrosepticum (strain SCRI 1043 / ATCC BAA-672) (Erwinia carotovora subsp. atroseptica)).